Consider the following 203-residue polypeptide: Protein GrpE (203 aa).

Belongs to the GrpE family. In terms of assembly, homodimer.

It is found in the cytoplasm. Participates actively in the response to hyperosmotic and heat shock by preventing the aggregation of stress-denatured proteins, in association with DnaK and GrpE. It is the nucleotide exchange factor for DnaK and may function as a thermosensor. Unfolded proteins bind initially to DnaJ; upon interaction with the DnaJ-bound protein, DnaK hydrolyzes its bound ATP, resulting in the formation of a stable complex. GrpE releases ADP from DnaK; ATP binding to DnaK triggers the release of the substrate protein, thus completing the reaction cycle. Several rounds of ATP-dependent interactions between DnaJ, DnaK and GrpE are required for fully efficient folding. This Pseudoalteromonas translucida (strain TAC 125) protein is Protein GrpE.